Reading from the N-terminus, the 375-residue chain is Succinyl-diaminopimelate desuccinylase (375 aa).

Position 66 (histidine 66) interacts with Zn(2+). Aspartate 68 is an active-site residue. Aspartate 99 contacts Zn(2+). Glutamate 133 serves as the catalytic Proton acceptor. The Zn(2+) site is built by glutamate 134, glutamate 162, and histidine 348.

Belongs to the peptidase M20A family. DapE subfamily. In terms of assembly, homodimer. Zn(2+) serves as cofactor. The cofactor is Co(2+).

It catalyses the reaction N-succinyl-(2S,6S)-2,6-diaminopimelate + H2O = (2S,6S)-2,6-diaminopimelate + succinate. It functions in the pathway amino-acid biosynthesis; L-lysine biosynthesis via DAP pathway; LL-2,6-diaminopimelate from (S)-tetrahydrodipicolinate (succinylase route): step 3/3. Catalyzes the hydrolysis of N-succinyl-L,L-diaminopimelic acid (SDAP), forming succinate and LL-2,6-diaminopimelate (DAP), an intermediate involved in the bacterial biosynthesis of lysine and meso-diaminopimelic acid, an essential component of bacterial cell walls. The sequence is that of Succinyl-diaminopimelate desuccinylase from Yersinia pseudotuberculosis serotype O:1b (strain IP 31758).